A 562-amino-acid polypeptide reads, in one-letter code: Dihydroxy-acid dehydratase (562 aa).

D80 is a Mg(2+) binding site. C121 contacts [2Fe-2S] cluster. The Mg(2+) site is built by D122 and K123. An N6-carboxylysine modification is found at K123. [2Fe-2S] cluster is bound at residue C194. E446 provides a ligand contact to Mg(2+). S472 (proton acceptor) is an active-site residue.

Belongs to the IlvD/Edd family. Homodimer. It depends on [2Fe-2S] cluster as a cofactor. Requires Mg(2+) as cofactor.

It carries out the reaction (2R)-2,3-dihydroxy-3-methylbutanoate = 3-methyl-2-oxobutanoate + H2O. It catalyses the reaction (2R,3R)-2,3-dihydroxy-3-methylpentanoate = (S)-3-methyl-2-oxopentanoate + H2O. It participates in amino-acid biosynthesis; L-isoleucine biosynthesis; L-isoleucine from 2-oxobutanoate: step 3/4. The protein operates within amino-acid biosynthesis; L-valine biosynthesis; L-valine from pyruvate: step 3/4. Functionally, functions in the biosynthesis of branched-chain amino acids. Catalyzes the dehydration of (2R,3R)-2,3-dihydroxy-3-methylpentanoate (2,3-dihydroxy-3-methylvalerate) into 2-oxo-3-methylpentanoate (2-oxo-3-methylvalerate) and of (2R)-2,3-dihydroxy-3-methylbutanoate (2,3-dihydroxyisovalerate) into 2-oxo-3-methylbutanoate (2-oxoisovalerate), the penultimate precursor to L-isoleucine and L-valine, respectively. This is Dihydroxy-acid dehydratase from Staphylococcus aureus (strain MRSA252).